The sequence spans 639 residues: PTS-dependent dihydroxyacetone kinase operon regulatory protein (639 aa).

A sensor domain region spans residues 1–318 (MSGAFNNDGR…MRQLMTSQLG (318 aa)). Positions 52-189 (AMLTLGQAAL…AIAREVGNLL (138 aa)) constitute a GAF domain. Residues 203–265 (NQLNALLESM…AVLQQAIKQA (63 aa)) form the PAS domain. The 226-residue stretch at 327-552 (MPQDDPQTRR…LYSVIENLAL (226 aa)) folds into the Sigma-54 factor interaction domain. ATP-binding positions include 355–362 (GEEGVGKA) and 415–424 (AHGGTLFLEK).

As to quaternary structure, homodimer. DhaR forms complexes with DhaK and DhaL-ADP.

Functionally, positively regulates the dhaKLM operon from a sigma-70 promoter. Represses its own expression. The protein is PTS-dependent dihydroxyacetone kinase operon regulatory protein of Escherichia coli (strain K12).